Consider the following 396-residue polypeptide: MTTLVLDNGAYNAKIGYSHDSVSVIPNCQFRSKTARLKTFTANQIDEIKDPSGLFYILPFQKGYLVNWDVQRQVWDYLFGKEMYQVDFLDTNIIITEPYFNFTSIQESMNEILFEEYQFQAVLRVNAGALSAHRYFRDNPSELCCIIVDSGYSFTHIVPYCRSKKKKEAIIRINVGGKLLTNHLKEIISYRQLHVMDETHVINQVKEDVCYVSQDFYRDMDIAKLKGEDNTVMIDYVLPDFSTIKKGFCKPREEMVLSGKYKSGEQILRLANERFAVPEILFNPSDIGIQEMGIPEAIVYSIQNLPEEMQPHFFKNIVLTGGNSLFPGFRERVYSEVRCLTPTDYDVSVVLPENPITYSWEGGKLISENDDFEDMVVTREDYEENGHSVCEEKFDI.

At T2 the chain carries N-acetylthreonine. K260 carries the post-translational modification N6-acetyllysine.

Belongs to the actin family. ARP6 subfamily. In terms of assembly, component of the chromatin-remodeling SRCAP complex composed of at least SRCAP, DMAP1, RUVBL1, RUVBL2, ACTL6A, YEATS4, ACTR6 and ZNHIT1. Interacts with CBX1, CBX3 and CBX5.

Its subcellular location is the cytoplasm. The protein resides in the cytoskeleton. The protein localises to the nucleus. It is found in the nucleolus. Its function is as follows. Required for formation and/or maintenance of proper nucleolar structure and function. Plays a dual role in the regulation of ribosomal DNA (rDNA) transcription. In the presence of high glucose, maintains active rDNA transcription through H2A.Z deposition and under glucose starvation, is required for the repression of rDNA transcription, and this function may be independent of H2A.Z. In Mus musculus (Mouse), this protein is Actin-related protein 6 (Actr6).